The chain runs to 185 residues: Ribosome-recycling factor (185 aa).

This sequence belongs to the RRF family.

It is found in the cytoplasm. Responsible for the release of ribosomes from messenger RNA at the termination of protein biosynthesis. May increase the efficiency of translation by recycling ribosomes from one round of translation to another. This chain is Ribosome-recycling factor, found in Syntrophobacter fumaroxidans (strain DSM 10017 / MPOB).